A 701-amino-acid polypeptide reads, in one-letter code: uncharacterized protein (701 aa).

This is an uncharacterized protein from Saccharomyces cerevisiae (strain ATCC 204508 / S288c) (Baker's yeast).